A 485-amino-acid polypeptide reads, in one-letter code: Regulatory protein ViaA (485 aa).

This sequence belongs to the ViaA family. As to quaternary structure, homodimer. Interacts with RavA.

Its subcellular location is the cytoplasm. In terms of biological role, component of the RavA-ViaA chaperone complex, which may act on the membrane to optimize the function of some of the respiratory chains. ViaA stimulates the ATPase activity of RavA. In Proteus mirabilis (strain HI4320), this protein is Regulatory protein ViaA.